Reading from the N-terminus, the 233-residue chain is MDAREIIEMIAKAKKKTPIVAYIKGDLAGIDFSSFKFFGDERFGILFGEYEDFKKLLEEHREKIEDYHLEVKARNSALPLADLTKYKARIEPGAIIRDMVEIGEGAVIMMGAVINVGAVIGEGTMIDMNAVVGGRAIIGKKCHIGAGAVIAGVIEPPSAKPVVIEDEVLVGANAVILEGVTVGKGAVVAAGAVVTKDVPPYTVVAGVPARVIKQIDEKTKEKTKIVDELRNLE.

Belongs to the transferase hexapeptide repeat family. DapH subfamily.

The catalysed reaction is (S)-2,3,4,5-tetrahydrodipicolinate + acetyl-CoA + H2O = L-2-acetamido-6-oxoheptanedioate + CoA. Its pathway is amino-acid biosynthesis; L-lysine biosynthesis via DAP pathway; LL-2,6-diaminopimelate from (S)-tetrahydrodipicolinate (acetylase route): step 1/3. In terms of biological role, catalyzes the transfer of an acetyl group from acetyl-CoA to tetrahydrodipicolinate. The chain is 2,3,4,5-tetrahydropyridine-2,6-dicarboxylate N-acetyltransferase from Thermotoga sp. (strain RQ2).